The sequence spans 183 residues: MEVQELFLLALAISLDAFGVILCIGINKGITLKSSIIFVFSFGFFQFFLSFLGGYIGTIFNKYIVPIPTIVGGLIIIIVGILMITEGFKEKEESIFLNKIMYLILGVSVSIDALVIGFTTLSYINNLFYLFMSSLFMGLIATIICSLGIILSKYIKKISIISSYADYIGGIILILFGLKMLFF.

The next 6 membrane-spanning stretches (helical) occupy residues L6 to I26, I36 to I56, I64 to I84, I100 to T120, L130 to I150, and I158 to L178.

This sequence belongs to the MntP (TC 9.B.29) family.

The protein resides in the cell membrane. Functionally, probably functions as a manganese efflux pump. The chain is Putative manganese efflux pump MntP 1 from Clostridium botulinum (strain Langeland / NCTC 10281 / Type F).